Here is a 508-residue protein sequence, read N- to C-terminus: Cell division protein FtsZ (508 aa).

GTP-binding positions include 24–28, 111–113, E142, R146, and D190; these read GAGGN and GTG. Disordered stretches follow at residues 342 to 389 and 428 to 508; these read IAET…SAPQ and VAEE…RLAN. Positions 464-482 are enriched in low complexity; the sequence is QQASAPQAQARSAQSARPQ.

This sequence belongs to the FtsZ family. Homodimer. Polymerizes to form a dynamic ring structure in a strictly GTP-dependent manner. Interacts directly with several other division proteins.

It localises to the cytoplasm. Its function is as follows. Essential cell division protein that forms a contractile ring structure (Z ring) at the future cell division site. The regulation of the ring assembly controls the timing and the location of cell division. One of the functions of the FtsZ ring is to recruit other cell division proteins to the septum to produce a new cell wall between the dividing cells. Binds GTP and shows GTPase activity. The sequence is that of Cell division protein FtsZ from Caulobacter vibrioides (strain ATCC 19089 / CIP 103742 / CB 15) (Caulobacter crescentus).